We begin with the raw amino-acid sequence, 304 residues long: Energy-coupling factor transporter ATP-binding protein EcfA2 (304 aa).

Positions 11–260 (LKADEILAVS…QTFLEKTTIV (250 aa)) constitute an ABC transporter domain. 54 to 61 (GDSGSGKS) provides a ligand contact to ATP.

It belongs to the ABC transporter superfamily. Energy-coupling factor EcfA family. In terms of assembly, forms a stable energy-coupling factor (ECF) transporter complex composed of 2 membrane-embedded substrate-binding proteins (S component), 2 ATP-binding proteins (A component) and 2 transmembrane proteins (T component).

The protein localises to the cell membrane. ATP-binding (A) component of a common energy-coupling factor (ECF) ABC-transporter complex. Unlike classic ABC transporters this ECF transporter provides the energy necessary to transport a number of different substrates. The chain is Energy-coupling factor transporter ATP-binding protein EcfA2 from Mycoplasma genitalium (strain ATCC 33530 / DSM 19775 / NCTC 10195 / G37) (Mycoplasmoides genitalium).